The primary structure comprises 568 residues: Sulfite reductase [NADPH] hemoprotein beta-component (568 aa).

[4Fe-4S] cluster-binding residues include Cys-426, Cys-432, Cys-471, and Cys-475. Cys-475 serves as a coordination point for siroheme.

This sequence belongs to the nitrite and sulfite reductase 4Fe-4S domain family. As to quaternary structure, alpha(8)-beta(8). The alpha component is a flavoprotein, the beta component is a hemoprotein. Requires siroheme as cofactor. It depends on [4Fe-4S] cluster as a cofactor.

The enzyme catalyses hydrogen sulfide + 3 NADP(+) + 3 H2O = sulfite + 3 NADPH + 4 H(+). The protein operates within sulfur metabolism; hydrogen sulfide biosynthesis; hydrogen sulfide from sulfite (NADPH route): step 1/1. Functionally, component of the sulfite reductase complex that catalyzes the 6-electron reduction of sulfite to sulfide. This is one of several activities required for the biosynthesis of L-cysteine from sulfate. In Xylella fastidiosa (strain M12), this protein is Sulfite reductase [NADPH] hemoprotein beta-component.